A 474-amino-acid polypeptide reads, in one-letter code: tRNA-2-methylthio-N(6)-dimethylallyladenosine synthase (474 aa).

The MTTase N-terminal domain maps to 3–120; the sequence is KKLHIKTWGC…LPEMINSVRG (118 aa). Cys12, Cys49, Cys83, Cys157, Cys161, and Cys164 together coordinate [4Fe-4S] cluster. A Radical SAM core domain is found at 143-375; it reads RAEGPTAFVS…QERINQQAMA (233 aa). Residues 378–441 form the TRAM domain; sequence RRMLGTTQRI…PNSLRGKVVR (64 aa).

It belongs to the methylthiotransferase family. MiaB subfamily. As to quaternary structure, monomer. It depends on [4Fe-4S] cluster as a cofactor.

It localises to the cytoplasm. It catalyses the reaction N(6)-dimethylallyladenosine(37) in tRNA + (sulfur carrier)-SH + AH2 + 2 S-adenosyl-L-methionine = 2-methylsulfanyl-N(6)-dimethylallyladenosine(37) in tRNA + (sulfur carrier)-H + 5'-deoxyadenosine + L-methionine + A + S-adenosyl-L-homocysteine + 2 H(+). The enzyme catalyses N(6)-dimethylallyladenosine(37) in tRNA + (sulfur carrier)-SH + AH2 + S-adenosyl-L-methionine = 2-thio-N(6)-dimethylallyladenosine(37) in tRNA + (sulfur carrier)-H + 5'-deoxyadenosine + L-methionine + A + H(+). It carries out the reaction 2-thio-N(6)-dimethylallyladenosine(37) in tRNA + S-adenosyl-L-methionine = 2-methylsulfanyl-N(6)-dimethylallyladenosine(37) in tRNA + S-adenosyl-L-homocysteine + H(+). Functionally, catalyzes the methylthiolation of N6-(dimethylallyl)adenosine (i(6)A), leading to the formation of 2-methylthio-N6-(dimethylallyl)adenosine (ms(2)i(6)A) at position 37 in tRNAs that read codons beginning with uridine. In Salmonella typhimurium (strain LT2 / SGSC1412 / ATCC 700720), this protein is tRNA-2-methylthio-N(6)-dimethylallyladenosine synthase.